A 201-amino-acid polypeptide reads, in one-letter code: Imidazole glycerol phosphate synthase subunit HisH 1 (201 aa).

The Glutamine amidotransferase type-1 domain maps to 1 to 201 (MIALIDYKAG…LKLLENFARL (201 aa)). Cys-80 acts as the Nucleophile in catalysis. Catalysis depends on residues His-183 and Glu-185.

Heterodimer of HisH and HisF.

Its subcellular location is the cytoplasm. It catalyses the reaction 5-[(5-phospho-1-deoxy-D-ribulos-1-ylimino)methylamino]-1-(5-phospho-beta-D-ribosyl)imidazole-4-carboxamide + L-glutamine = D-erythro-1-(imidazol-4-yl)glycerol 3-phosphate + 5-amino-1-(5-phospho-beta-D-ribosyl)imidazole-4-carboxamide + L-glutamate + H(+). The enzyme catalyses L-glutamine + H2O = L-glutamate + NH4(+). The protein operates within amino-acid biosynthesis; L-histidine biosynthesis; L-histidine from 5-phospho-alpha-D-ribose 1-diphosphate: step 5/9. Its function is as follows. IGPS catalyzes the conversion of PRFAR and glutamine to IGP, AICAR and glutamate. The HisH subunit provides the glutamine amidotransferase activity that produces the ammonia necessary to HisF for the synthesis of IGP and AICAR. This is Imidazole glycerol phosphate synthase subunit HisH 1 (hisH1) from Campylobacter jejuni subsp. jejuni serotype O:23/36 (strain 81-176).